The sequence spans 145 residues: 3-dehydroquinate dehydratase (145 aa).

Y23 acts as the Proton acceptor in catalysis. 3 residues coordinate substrate: N73, H79, and D86. The active-site Proton donor is the H99. Substrate contacts are provided by residues L100–S101 and R110.

It belongs to the type-II 3-dehydroquinase family. Homododecamer.

The enzyme catalyses 3-dehydroquinate = 3-dehydroshikimate + H2O. It participates in metabolic intermediate biosynthesis; chorismate biosynthesis; chorismate from D-erythrose 4-phosphate and phosphoenolpyruvate: step 3/7. Its function is as follows. Catalyzes a trans-dehydration via an enolate intermediate. This is 3-dehydroquinate dehydratase from Desulfitobacterium hafniense (strain Y51).